Reading from the N-terminus, the 89-residue chain is Small ribosomal subunit protein uS15 (89 aa).

This sequence belongs to the universal ribosomal protein uS15 family. Part of the 30S ribosomal subunit. Forms a bridge to the 50S subunit in the 70S ribosome, contacting the 23S rRNA.

Functionally, one of the primary rRNA binding proteins, it binds directly to 16S rRNA where it helps nucleate assembly of the platform of the 30S subunit by binding and bridging several RNA helices of the 16S rRNA. Forms an intersubunit bridge (bridge B4) with the 23S rRNA of the 50S subunit in the ribosome. In Vibrio atlanticus (strain LGP32) (Vibrio splendidus (strain Mel32)), this protein is Small ribosomal subunit protein uS15.